The chain runs to 216 residues: Adenylate kinase (216 aa).

Glycine 10–threonine 15 is a binding site for ATP. The NMP stretch occupies residues serine 30–valine 59. AMP-binding positions include threonine 31, arginine 36, alanine 57–valine 59, glycine 85–arginine 88, and glutamine 92. An LID region spans residues glycine 126–aspartate 163. Arginine 127 is a binding site for ATP. Zn(2+)-binding residues include cysteine 130 and cysteine 133. An ATP-binding site is contributed by threonine 136–tyrosine 137. Cysteine 150 and cysteine 153 together coordinate Zn(2+). Residues arginine 160 and arginine 171 each contribute to the AMP site. Glutamine 199 provides a ligand contact to ATP.

The protein belongs to the adenylate kinase family. Monomer.

It is found in the cytoplasm. The enzyme catalyses AMP + ATP = 2 ADP. It participates in purine metabolism; AMP biosynthesis via salvage pathway; AMP from ADP: step 1/1. In terms of biological role, catalyzes the reversible transfer of the terminal phosphate group between ATP and AMP. Plays an important role in cellular energy homeostasis and in adenine nucleotide metabolism. The sequence is that of Adenylate kinase from Bacillus cereus (strain ATCC 10987 / NRS 248).